The chain runs to 146 residues: Large ribosomal subunit protein uL15 (146 aa).

Residues 1–13 (MKLHELKPAEGSR) are compositionally biased toward basic and acidic residues. The segment at 1–52 (MKLHELKPAEGSRKVRNRVGRGIGSGNGKTAGKGHKGQNARSGGGVRLGFEG) is disordered. Composition is skewed to gly residues over residues 21 to 31 (RGIGSGNGKTA) and 42 to 52 (SGGGVRLGFEG).

The protein belongs to the universal ribosomal protein uL15 family. As to quaternary structure, part of the 50S ribosomal subunit.

In terms of biological role, binds to the 23S rRNA. This chain is Large ribosomal subunit protein uL15, found in Bacillus cereus (strain B4264).